Consider the following 266-residue polypeptide: OCIA domain-containing protein 1 (266 aa).

In terms of domain architecture, OCIA spans 1–114; it reads MSQASSGFTP…MKLENSPLGE (114 aa). Disordered stretches follow at residues 127–213 and 225–266; these read EMNQ…DVPK and KNRE…SWEE. The segment covering 135-155 has biased composition (polar residues); that stretch reads PNSSESQQPGSESVQQPATEV. Low complexity predominate over residues 156-178; that stretch reads SSATESYSSYTSDYTYSTPSQSY. The segment covering 179 to 188 has biased composition (polar residues); that stretch reads ETTPFSSGFS. The segment covering 250 to 266 has biased composition (basic and acidic residues); that stretch reads QPKKEAKKNKYGDSWEE.

This sequence belongs to the OCIAD1 family.

The protein localises to the endosome. The chain is OCIA domain-containing protein 1 (ociad1) from Danio rerio (Zebrafish).